Here is a 111-residue protein sequence, read N- to C-terminus: uncharacterized protein (111 aa).

Residue Gly2 is the site of N-myristoyl glycine; by host attachment.

This is an uncharacterized protein from Acanthamoeba polyphaga mimivirus (APMV).